The following is a 323-amino-acid chain: Transcription factor MafB (323 aa).

Residue lysine 32 forms a Glycyl lysine isopeptide (Lys-Gly) (interchain with G-Cter in SUMO) linkage. A compositionally biased stretch (basic and acidic residues) spans 34 to 43; the sequence is EPLGRAERPG. Disordered regions lie at residues 34–78 and 116–210; these read EPLG…PTEQ and PVPQ…VEDR. Residues 54 to 76 show a composition bias toward low complexity; that stretch reads SLSSTPLSTPCSSVPSSPSFSPT. Composition is skewed to basic residues over residues 129–143 and 159–168; these read GAHHHHHHHHPHPHH and AHPHHHHHHQ. A compositionally biased stretch (low complexity) spans 192–201; that stretch reads PHATASATAA. Positions 238 to 263 are basic motif; it reads RLKQKRRTLKNRGYAQSCRYKRVQQK. The region spanning 238–301 is the bZIP domain; the sequence is RLKQKRRTLK…DAHKVKCEKL (64 aa). The interval 266–287 is leucine-zipper; it reads LENEKTQLIQQVEQLKQEVSRL. Residue lysine 297 forms a Glycyl lysine isopeptide (Lys-Gly) (interchain with G-Cter in SUMO) linkage.

This sequence belongs to the bZIP family. Maf subfamily. As to quaternary structure, homodimer or heterodimer with other bHLH-Zip transcription factors. Binds DNA as a homodimer or a heterodimer. Forms homodimers and heterodimers with FOS, FOSB and FOSL2, but not with JUN proteins (JUN, JUNB and JUND). Interacts with PAX6; the interaction is direct. Interacts with ETS1 and LRP1. Interacts with the intracellular cytoplasmic domain of LRP1 (LRPICD); the interaction results in a moderate reduction of MAFB transcriptional potential. In terms of processing, sumoylated. Sumoylation on Lys-32 and Lys-297 stimulates its transcriptional repression activity and promotes macrophage differentiation from myeloid progenitors.

Its subcellular location is the nucleus. Functionally, acts as a transcriptional activator or repressor. Plays a pivotal role in regulating lineage-specific hematopoiesis by repressing ETS1-mediated transcription of erythroid-specific genes in myeloid cells. Required for monocytic, macrophage, osteoclast, podocyte and islet beta cell differentiation. Involved in renal tubule survival and F4/80 maturation. Activates the insulin and glucagon promoters. Together with PAX6, transactivates weakly the glucagon gene promoter through the G1 element. SUMO modification controls its transcriptional activity and ability to specify macrophage fate. Binds element G1 on the glucagon promoter. Involved either as an oncogene or as a tumor suppressor, depending on the cell context. Required for the transcriptional activation of HOXB3 in the rhombomere r5 in the hindbrain. This chain is Transcription factor MafB (MAFB), found in Macaca fascicularis (Crab-eating macaque).